Reading from the N-terminus, the 78-residue chain is UPF0335 protein RP113 (78 aa).

Belongs to the UPF0335 family.

This chain is UPF0335 protein RP113, found in Rickettsia prowazekii (strain Madrid E).